The primary structure comprises 456 residues: Enolase (456 aa).

Residue Gln-169 coordinates (2R)-2-phosphoglycerate. The Proton donor role is filled by Glu-211. The Mg(2+) site is built by Asp-252, Glu-314, and Asp-341. (2R)-2-phosphoglycerate contacts are provided by Lys-366, Arg-395, Ser-396, and Lys-417. Catalysis depends on Lys-366, which acts as the Proton acceptor.

Belongs to the enolase family. It depends on Mg(2+) as a cofactor.

The protein resides in the cytoplasm. It localises to the secreted. The protein localises to the cell surface. It carries out the reaction (2R)-2-phosphoglycerate = phosphoenolpyruvate + H2O. Its pathway is carbohydrate degradation; glycolysis; pyruvate from D-glyceraldehyde 3-phosphate: step 4/5. Its function is as follows. Catalyzes the reversible conversion of 2-phosphoglycerate (2-PG) into phosphoenolpyruvate (PEP). It is essential for the degradation of carbohydrates via glycolysis. This is Enolase from Metamycoplasma arthritidis (strain 158L3-1) (Mycoplasma arthritidis).